We begin with the raw amino-acid sequence, 252 residues long: Large ribosomal subunit protein uL4 (252 aa).

It belongs to the universal ribosomal protein uL4 family. In terms of assembly, part of the 50S ribosomal subunit.

One of the primary rRNA binding proteins, this protein initially binds near the 5'-end of the 23S rRNA. It is important during the early stages of 50S assembly. It makes multiple contacts with different domains of the 23S rRNA in the assembled 50S subunit and ribosome. Functionally, forms part of the polypeptide exit tunnel. The protein is Large ribosomal subunit protein uL4 of Methanococcus vannielii (strain ATCC 35089 / DSM 1224 / JCM 13029 / OCM 148 / SB).